Reading from the N-terminus, the 112-residue chain is CENP-A recruiting complex protein mis19 (112 aa).

Component of the CENP-A recruiting complex composed of at least mis16, mis19, mis19 and mis20.

It localises to the chromosome. The protein resides in the centromere. The protein localises to the kinetochore. Functionally, component of the CENP-A recruiting complex that ensures the integrity of mitotic spindles through maintenance of kinetochore factors mis6/CENP-I and cnp1/CENP-A. Links mis16 and mis18 to recruit CENP-A through interacting with non-sense-mediated mRNA decay (NMD) factors and the SWI/SNF complex. Also links mis18 with the CCAN/mis6/ctf19 complex to promote CENP-A assembly. This Schizosaccharomyces pombe (strain 972 / ATCC 24843) (Fission yeast) protein is CENP-A recruiting complex protein mis19.